A 273-amino-acid chain; its full sequence is Nitrogenase iron protein (273 aa).

ATP is bound at residue 8–15 (GKGGIGKS). Residue Cys95 coordinates [4Fe-4S] cluster. The residue at position 98 (Arg98) is an ADP-ribosylarginine; by dinitrogenase reductase ADP-ribosyltransferase. Residue Cys130 coordinates [4Fe-4S] cluster.

It belongs to the NifH/BchL/ChlL family. As to quaternary structure, homodimer. [4Fe-4S] cluster serves as cofactor. In terms of processing, the reversible ADP-ribosylation of Arg-98 inactivates the nitrogenase reductase and regulates nitrogenase activity.

The enzyme catalyses N2 + 8 reduced [2Fe-2S]-[ferredoxin] + 16 ATP + 16 H2O = H2 + 8 oxidized [2Fe-2S]-[ferredoxin] + 2 NH4(+) + 16 ADP + 16 phosphate + 6 H(+). In terms of biological role, the key enzymatic reactions in nitrogen fixation are catalyzed by the nitrogenase complex, which has 2 components: the iron protein and the molybdenum-iron protein. The polypeptide is Nitrogenase iron protein (Roseiflexus sp. (strain RS-1)).